Consider the following 888-residue polypeptide: ETO1-like protein 1 (888 aa).

In terms of domain architecture, BTB spans 180-280 (KNVVFKIGEE…ACDRELASLI (101 aa)). 5 TPR repeats span residues 381 to 414 (VLGFHRLGCMRLLRKEYREAEEAFETAFNLGHVY), 441 to 477 (SSVSPPLGWMYQERSFYCEGDKKLEDLEKATELDPTL), 511 to 544 (LECLEIRFCLYLGMDDYEAALRDIQAALTLCPDY), 637 to 670 (HERLVYEGWILYDTGHCEEGLQKAKESIGIKRSF), and 711 to 744 (GQALNNLGSVYVDCEKLDLAADCYINALKVRHTR). A coiled-coil region spans residues 755 to 793 (LRNDKAAAYEEMTRLIEKAQNNASAYEKRSEYCDRELAK). 2 TPR repeats span residues 807–840 (VYPYRYRAAVLMDSRKEREAITELSRAIAFKADL) and 842–873 (LLHLRAAFHEHIGDVTSALRDCRAALSVDPNH).

It belongs to the ETO1 family. As to quaternary structure, interacts with the C-terminal domain of ACS4, ACS5 and ACS9. Predominantly expressed in flowers.

The protein operates within protein modification; protein ubiquitination. Functionally, possible regulator of the ethylene pathway, which acts by regulating the stability of 1-aminocyclopropane-1-carboxylate synthase (ACS) enzymes. May act as a substrate-specific adapter that connects ACS enzymes, such as ACS5, to ubiquitin ligase complexes, leading to proteasomal degradation of ACS enzymes. The sequence is that of ETO1-like protein 1 (EOL1) from Arabidopsis thaliana (Mouse-ear cress).